Reading from the N-terminus, the 251-residue chain is Gamma-glutamyl peptidase 4 (251 aa).

Residues 16–213 (SEFAKKTYGG…IDRVLAGGHI (198 aa)) form the Glutamine amidotransferase type-1 domain. Catalysis depends on C100, which acts as the Nucleophile. Catalysis depends on residues H192 and E194.

The protein belongs to the peptidase C26 family.

Its subcellular location is the cytoplasm. It localises to the cytosol. It functions in the pathway secondary metabolite biosynthesis. Involved in glucosinolate biosynthesis. Hydrolyzes the gamma-glutamyl peptide bond of several glutathione (GSH) conjugates to produce Cys-Gly conjugates related to glucosinolates. The gamma-Glu-Cys-Gly-GSH conjugates are the sulfur-donating molecule in glucosinolate biosynthesis. In Arabidopsis thaliana (Mouse-ear cress), this protein is Gamma-glutamyl peptidase 4.